We begin with the raw amino-acid sequence, 401 residues long: Exodeoxyribonuclease 7 large subunit (401 aa).

Belongs to the XseA family. Heterooligomer composed of large and small subunits.

It is found in the cytoplasm. It catalyses the reaction Exonucleolytic cleavage in either 5'- to 3'- or 3'- to 5'-direction to yield nucleoside 5'-phosphates.. Bidirectionally degrades single-stranded DNA into large acid-insoluble oligonucleotides, which are then degraded further into small acid-soluble oligonucleotides. In Clostridium botulinum (strain Hall / ATCC 3502 / NCTC 13319 / Type A), this protein is Exodeoxyribonuclease 7 large subunit.